The chain runs to 547 residues: MFDFGLSEDDSELGEVDEDDGPSGFEDDLFDDEGGEKNLVESPAKNSAPFESIKGEPIDQEGVVHTRESGGGDSYLSQTRFDECSLSPLTLKGVKAAGYERMTAVQEATLPIILKGKDVLAKAKTGTGKTVAFLLPAIEVVSKLPPIDCDKKRPPISVVVVCPTRELADQAAAEANKLLKFHPSIGVQLVIGGTRMALEQKRMHTNPCQILVATPGRLKDHMENTPGFATRLMGVKVLILDEADRLLDMGFRTDIERIVAALPKQRQTLLFSATVPDEVRQVCHIAMKRDLEFVNTVEEGSEETHSQVKQMHVVAPLDKQFSILYGLLTDHISENVDYKVIVFCTTAKVTSLVAELLSELKLNVREIHSRKPQSYRTRISKEFKESKGLILVSSDVSARGVDYPNVTLVVQMGVPTDREQYIHRLGRTGRRGNEGSGILLLAPWEEYFLRSIKDLPITEATLPLIDLDTKRKVEKALAHVEVKDKELAYQAWLGYYNSNKFIGRDKYQLVSLANEFSRSLGLNNPPAVPKLVLRKMGLNNIPGLRSK.

Over residues 1-34 the composition is skewed to acidic residues; the sequence is MFDFGLSEDDSELGEVDEDDGPSGFEDDLFDDEG. The interval 1–74 is disordered; sequence MFDFGLSEDD…HTRESGGGDS (74 aa). A compositionally biased stretch (basic and acidic residues) spans 53 to 70; the sequence is IKGEPIDQEGVVHTRESG. The Q motif motif lies at 79–107; the sequence is TRFDECSLSPLTLKGVKAAGYERMTAVQE. In terms of domain architecture, Helicase ATP-binding spans 110–293; the sequence is LPIILKGKDV…HIAMKRDLEF (184 aa). 123–130 contacts ATP; that stretch reads AKTGTGKT. Positions 241–244 match the DEAD box motif; the sequence is DEAD. The Helicase C-terminal domain maps to 327 to 478; sequence LLTDHISENV…TKRKVEKALA (152 aa).

It belongs to the DEAD box helicase family.

It catalyses the reaction ATP + H2O = ADP + phosphate + H(+). The protein is DEAD-box ATP-dependent RNA helicase 31 of Oryza sativa subsp. japonica (Rice).